A 427-amino-acid chain; its full sequence is Serine--tRNA ligase (427 aa).

233–235 (TAE) lines the L-serine pocket. 264–266 (RSE) lines the ATP pocket. L-serine is bound at residue Glu-287. 351-354 (EISS) provides a ligand contact to ATP. L-serine is bound at residue Ser-386.

Belongs to the class-II aminoacyl-tRNA synthetase family. Type-1 seryl-tRNA synthetase subfamily. As to quaternary structure, homodimer. The tRNA molecule binds across the dimer.

It localises to the cytoplasm. It catalyses the reaction tRNA(Ser) + L-serine + ATP = L-seryl-tRNA(Ser) + AMP + diphosphate + H(+). It carries out the reaction tRNA(Sec) + L-serine + ATP = L-seryl-tRNA(Sec) + AMP + diphosphate + H(+). It functions in the pathway aminoacyl-tRNA biosynthesis; selenocysteinyl-tRNA(Sec) biosynthesis; L-seryl-tRNA(Sec) from L-serine and tRNA(Sec): step 1/1. Functionally, catalyzes the attachment of serine to tRNA(Ser). Is also able to aminoacylate tRNA(Sec) with serine, to form the misacylated tRNA L-seryl-tRNA(Sec), which will be further converted into selenocysteinyl-tRNA(Sec). The protein is Serine--tRNA ligase of Dechloromonas aromatica (strain RCB).